An 817-amino-acid chain; its full sequence is Two pore calcium channel protein 1 (817 aa).

The Cytoplasmic portion of the chain corresponds to 1-113; the sequence is MAVSLDDDVP…VHNHFFYMME (113 aa). The tract at residues 20–65 is disordered; that stretch reads SAPLPPSNSLGQEQLPSKNGGSHSIHNSQVPSLVSGADSPPSSPTG. Polar residues predominate over residues 26–51; sequence SNSLGQEQLPSKNGGSHSIHNSQVPS. The chain crosses the membrane as a helical span at residues 114–134; the sequence is LLTALLLLLLSLCESPAVPVL. Residues 135–137 are Extracellular-facing; that stretch reads KLH. A helical transmembrane segment spans residues 138-158; the sequence is TYVHATLELFALMVVVFELCM. Residues 159–172 are Cytoplasmic-facing; the sequence is KLRWLGFHTFVRHK. Residues 173–193 traverse the membrane as a helical segment; the sequence is RTMVKTSVLVVQFIEAIVVLV. Residues 194 to 202 are Extracellular-facing; it reads RQTSHVRVT. The helical transmembrane segment at 203–221 threads the bilayer; sequence RALRCIFLVDCRYCGGVRR. Topologically, residues 222–235 are cytoplasmic; the sequence is NLRQIFQSLPPFMD. The helical transmembrane segment at 236–256 threads the bilayer; sequence ILLLLLFFMIIFAILGFYLFS. At 257 to 263 the chain is on the extracellular side; it reads TNPSDPY. The helical; Pore-forming intramembrane region spans 264–287; the sequence is FSTLENSIVNLFVLLTTANFPDVM. Over 288–298 the chain is Extracellular; the sequence is MPSYSRNPWSC. Residues 299–319 form a helical membrane-spanning segment; the sequence is VFFIVYLSIELYFIMNLLLAV. Over 320-445 the chain is Cytoplasmic; the sequence is VFDTFNDIEK…NILVNSKAFQ (126 aa). The chain crosses the membrane as a helical span at residues 446–466; that stretch reads YFMYLVVAVNGVWILVETFML. Topologically, residues 467-480 are extracellular; sequence KGGNFTSKHVPWSY. N-linked (GlcNAc...) asparagine glycosylation occurs at asparagine 470. Residues 481–501 form a helical membrane-spanning segment; the sequence is LVFLTIYGVELFMKVAGLGPV. The Cytoplasmic segment spans residues 502–504; that stretch reads EYL. Residues 505 to 527 traverse the membrane as a helical segment; that stretch reads SSGWNLFDFSVTAFAFLGLLALT. Over 528 to 535 the chain is Extracellular; the sequence is LNMEPFYF. A helical membrane pass occupies residues 536-550; the sequence is IVVLRPLQLLRLFKL. At 551-569 the chain is on the cytoplasmic side; the sequence is KKRYRNVLDTMFELLPRMA. A helical membrane pass occupies residues 570–590; sequence SLGLTLLTFYYSFAIVGMEFF. Over 591 to 630 the chain is Extracellular; that stretch reads NGRLTPNCCNTSTVADAYRFINHTVGNKTKVEEGYYYLNN. The segment at residues 631-654 is an intramembrane region (helical; Pore-forming); the sequence is FDNILNSFVTLFELTVVNNWYIIM. The Extracellular portion of the chain corresponds to 655 to 671; the sequence is EGVTSQTSHWSRLYFMT. Residues 672–692 form a helical membrane-spanning segment; that stretch reads FYIVTMVVMTIIVAFILEAFV. The Cytoplasmic segment spans residues 693-817; sequence FRMNYSRKSQ…GSRQRSQTVT (125 aa). Positions 770-794 form a coiled coil; that stretch reads SLKMYQEEIQEWYEEHAREQEQQKL. Residues 785–817 are disordered; that stretch reads HAREQEQQKLRGSVPGPAAQQPPGSRQRSQTVT. A compositionally biased stretch (polar residues) spans 806-817; the sequence is PPGSRQRSQTVT.

The protein belongs to the calcium channel alpha-1 subunit (TC 1.A.1.11) family. Two pore calcium channel subfamily. Dimer. Interacts with MTOR; the interaction is required for TPCN1 ATP sensitivity. Interacts with STX7, STX8 and STX12. Interacts with JPT2. Found in a complex with LSM12, TPCN1 and TPCN2. N-glycosylated. As to expression, mainly expressed in epithelial tissues like lung, kidney, colon, spleen and liver (at protein level).

It localises to the lysosome membrane. The protein resides in the endosome membrane. Its subcellular location is the early endosome membrane. The protein localises to the recycling endosome membrane. The enzyme catalyses Na(+)(in) = Na(+)(out). It carries out the reaction Ca(2+)(in) = Ca(2+)(out). With respect to regulation, na(+) current is inhibited by ATP in a MTORC-dependent manner. ATP sensitivity is independent of PI(3,5)P2. Probably regulated by Mg(2+) ions, cytosolic Mg(2+) selectively inhibits outward current while lysosomal Mg(2+) modestly inhibits both the outward and inward currents. In the absence of Mg(2+), NAADP readily activates TPCN2, with properties similar to PI(3,5)P2. Both current elicited by PI(3,5)P2 as well as NAADP are inhibited by tetrandrine. In terms of biological role, intracellular channel initially characterized as a non-selective Ca(2+)-permeable channel activated by NAADP (nicotinic acid adenine dinucleotide phosphate), it is also a voltage-gated highly-selective Na(+) channel activated directly by PI(3,5)P2 (phosphatidylinositol 3,5-bisphosphate) that senses pH changes and confers electrical excitability to organelles. Localizes to the early and recycling endosomes membranes where it plays a role in the uptake and processing of proteins and regulates organellar membrane excitability, membrane trafficking and pH homeostasis. Ion selectivity is not fixed but rather agonist-dependent and under defined ionic conditions, can be readily activated by both NAADP and PI(3,5)P2. Required for mTOR-dependent nutrient sensing. This chain is Two pore calcium channel protein 1, found in Mus musculus (Mouse).